The chain runs to 491 residues: MSDDDQELGITESKSHNTGEWYAEVVQKAGLADYGPEGMSGFIVTRPRAYAVWERLQGFLDAKFKDTGVQNAYFPLFIPESYLEREKDIVEGFDPEVAWVTEAGNKELEERLAVRPTSESIITPYISQWVRSHRDLPLRVNQWCSVVRWEATETKPFFRTKEFLWQEGHTAHATHEGAWEETMTRLDQYASVYEDLLAMPVLKGQKPDHDKFPGAETTTTVEALMPDGKSVQAGTSHHLGQSFAEAFDITFSDEDEEERIAHTTSWGLSWRALGALIMTHSDEQGLVLPPGVAPEQVVVVPIWQEDTKDEVLEYAEGVADDLDDAGIRVELDDRDGRNPGFKFNEHELNGVPLRIEIGPHEVEDGELTLVHRPDGESVVEDREGVVATVQDHFDEVYAKLYATAEETLDGAVREADDRADILGTLGQHGGYVTAPWCGDEACEEPIKEPMAAEIVMVPFEDDDPLAEADHGETCAICDDDAERTAYFAKSY.

It belongs to the class-II aminoacyl-tRNA synthetase family. ProS type 3 subfamily. Homodimer.

The protein localises to the cytoplasm. It catalyses the reaction tRNA(Pro) + L-proline + ATP = L-prolyl-tRNA(Pro) + AMP + diphosphate. In terms of biological role, catalyzes the attachment of proline to tRNA(Pro) in a two-step reaction: proline is first activated by ATP to form Pro-AMP and then transferred to the acceptor end of tRNA(Pro). This is Proline--tRNA ligase from Halorubrum lacusprofundi (strain ATCC 49239 / DSM 5036 / JCM 8891 / ACAM 34).